The primary structure comprises 151 residues: Small ribosomal subunit protein uS11A (151 aa).

The interval 131–151 (DVTPIPSDSTRRKGGRRGRRL) is disordered. Positions 142-151 (RKGGRRGRRL) are enriched in basic residues.

Belongs to the universal ribosomal protein uS11 family.

The chain is Small ribosomal subunit protein uS11A from Drosophila melanogaster (Fruit fly).